An 840-amino-acid polypeptide reads, in one-letter code: Probable alpha-glucuronidase A (840 aa).

Positions Met-1–Ala-19 are cleaved as a signal peptide. Asn-50, Asn-149, Asn-222, Asn-262, Asn-279, Asn-310, Asn-465, Asn-527, Asn-576, Asn-610, Asn-682, Asn-723, and Asn-732 each carry an N-linked (GlcNAc...) asparagine glycan.

This sequence belongs to the glycosyl hydrolase 67 family.

It is found in the secreted. It carries out the reaction an alpha-D-glucuronoside + H2O = D-glucuronate + an alcohol. Its function is as follows. Alpha-glucuronidase involved in the hydrolysis of xylan, a major structural heterogeneous polysaccharide found in plant biomass representing the second most abundant polysaccharide in the biosphere, after cellulose. Releases 4-O-methylglucuronic acid from xylan. This is Probable alpha-glucuronidase A (aguA) from Aspergillus fumigatus (strain CBS 144.89 / FGSC A1163 / CEA10) (Neosartorya fumigata).